Reading from the N-terminus, the 250-residue chain is Tryptophan synthase alpha chain (250 aa).

Active-site proton acceptor residues include Glu31 and Asp42.

The protein belongs to the TrpA family. In terms of assembly, tetramer of two alpha and two beta chains.

The catalysed reaction is (1S,2R)-1-C-(indol-3-yl)glycerol 3-phosphate + L-serine = D-glyceraldehyde 3-phosphate + L-tryptophan + H2O. It functions in the pathway amino-acid biosynthesis; L-tryptophan biosynthesis; L-tryptophan from chorismate: step 5/5. Its function is as follows. The alpha subunit is responsible for the aldol cleavage of indoleglycerol phosphate to indole and glyceraldehyde 3-phosphate. The chain is Tryptophan synthase alpha chain from Staphylococcus carnosus (strain TM300).